Consider the following 378-residue polypeptide: Quinolinate synthase (378 aa).

Residues H59 and S80 each contribute to the iminosuccinate site. C125 lines the [4Fe-4S] cluster pocket. Iminosuccinate is bound by residues 151 to 153 (YAN) and S168. Residue C212 coordinates [4Fe-4S] cluster. Iminosuccinate-binding positions include 238 to 240 (HPE) and T255. C309 contributes to the [4Fe-4S] cluster binding site.

This sequence belongs to the quinolinate synthase family. Type 1 subfamily. [4Fe-4S] cluster serves as cofactor.

It is found in the cytoplasm. It catalyses the reaction iminosuccinate + dihydroxyacetone phosphate = quinolinate + phosphate + 2 H2O + H(+). It participates in cofactor biosynthesis; NAD(+) biosynthesis; quinolinate from iminoaspartate: step 1/1. Its function is as follows. Catalyzes the condensation of iminoaspartate with dihydroxyacetone phosphate to form quinolinate. This chain is Quinolinate synthase, found in Burkholderia orbicola (strain MC0-3).